The primary structure comprises 373 residues: Secondary metabolism regulator laeA (373 aa).

2 disordered regions span residues 1–21 (MFLN…PLNV) and 53–81 (AAER…NPDR). A compositionally biased stretch (polar residues) spans 67-77 (GSPSINSTSSK).

This sequence belongs to the methyltransferase superfamily. LaeA methyltransferase family. As to quaternary structure, component of the heterotrimeric velvet complex composed of laeA, veA and velB; VeA acting as a bridging protein between laeA and velB.

It localises to the nucleus. The enzyme catalyses L-methionyl-[protein] + S-adenosyl-L-methionine = S-methyl-L-methionyl-[protein] + S-adenosyl-L-homocysteine. Methyltransferase that performs automethylation. No other methyl-accepting substrate has been identified yet. Component of the velvet transcription factor complex that acts as a global regulator for secondary metabolite gene expression. Controls the expression of the cyclopiazonic acid (CPA) gene clusters. Regulates also pigmentation and conidial head morphology. This chain is Secondary metabolism regulator laeA, found in Aspergillus fumisynnematus.